The primary structure comprises 419 residues: Serine hydroxymethyltransferase (419 aa).

Residues L120 and 124–126 each bind (6S)-5,6,7,8-tetrahydrofolate; that span reads GHL. K229 is subject to N6-(pyridoxal phosphate)lysine.

The protein belongs to the SHMT family. Homodimer. Requires pyridoxal 5'-phosphate as cofactor.

It localises to the cytoplasm. The enzyme catalyses (6R)-5,10-methylene-5,6,7,8-tetrahydrofolate + glycine + H2O = (6S)-5,6,7,8-tetrahydrofolate + L-serine. The protein operates within one-carbon metabolism; tetrahydrofolate interconversion. It participates in amino-acid biosynthesis; glycine biosynthesis; glycine from L-serine: step 1/1. Its function is as follows. Catalyzes the reversible interconversion of serine and glycine with tetrahydrofolate (THF) serving as the one-carbon carrier. This reaction serves as the major source of one-carbon groups required for the biosynthesis of purines, thymidylate, methionine, and other important biomolecules. Also exhibits THF-independent aldolase activity toward beta-hydroxyamino acids, producing glycine and aldehydes, via a retro-aldol mechanism. The polypeptide is Serine hydroxymethyltransferase (Herpetosiphon aurantiacus (strain ATCC 23779 / DSM 785 / 114-95)).